A 195-amino-acid polypeptide reads, in one-letter code: MGGKQSSASRSRAPFPGVSSDDSAVPPSSNFGHFRAGGAMGLRSRSVSSVSGLDPPAPGLPFGLYRAGPDTERGGSSGSEDSRGDLYLGSRASLADTLQIAPRWIGAHSGFRCPICSKSVAPDEMEMHFIMCLSKPRLSYNDDVLTRDAGECVICLEELSQGDTIARLPCLCIYHKSCIDSWFEVNRCCPEHPSD.

A compositionally biased stretch (polar residues) spans 1-10; it reads MGGKQSSASR. 2 disordered regions span residues 1–36 and 61–84; these read MGGK…HFRA and PFGL…DSRG. A lipid anchor (N-myristoyl glycine) is attached at Gly-2. Residues 18–29 show a composition bias toward low complexity; it reads VSSDDSAVPPSS. Residues 152–193 form an RING-type; atypical zinc finger; it reads CVICLEELSQGDTIARLPCLCIYHKSCIDSWFEVNRCCPEHP.

The protein localises to the endosome. Its subcellular location is the lysosome. It localises to the membrane. It catalyses the reaction S-ubiquitinyl-[E2 ubiquitin-conjugating enzyme]-L-cysteine + [acceptor protein]-L-lysine = [E2 ubiquitin-conjugating enzyme]-L-cysteine + N(6)-ubiquitinyl-[acceptor protein]-L-lysine.. Its pathway is protein modification; protein ubiquitination. E3 ubiquitin-protein ligase that plays a role in neuron cells differentiation. Plays a role in the establishment and maintenance of neuronal transmission and plasticity. This Xenopus tropicalis (Western clawed frog) protein is E3 ubiquitin-protein ligase ZNRF1 (znrf1).